Here is a 442-residue protein sequence, read N- to C-terminus: Plasmalemma vesicle-associated protein (442 aa).

Residues 1-27 lie on the Cytoplasmic side of the membrane; sequence MGLAMEHGGSYARAGGSSRGCWYYLRY. Residues 28–48 traverse the membrane as a helical; Signal-anchor for type II membrane protein segment; the sequence is FFLFVSLIQFLIILGLVLFMV. Topologically, residues 49 to 442 are extracellular; the sequence is YGNVHVSTES…AGIPVAPSSG (394 aa). Residues 57–77 adopt a coiled-coil conformation; that stretch reads ESNLQATERRAEGLYSQLLGL. Residues Asn83, Asn89, Asn113, and Asn151 are each glycosylated (N-linked (GlcNAc...) asparagine). Coiled-coil stretches lie at residues 202 to 225 and 280 to 387; these read KTRE…QALC and SSKV…SALD. Disordered regions lie at residues 301–328 and 394–418; these read NSDL…VEKE and SQPM…PASL. Over residues 319–328 the composition is skewed to basic and acidic residues; sequence QEAKQKVEKE.

As to quaternary structure, homodimer. As to expression, expressed in lung, kidney, heart, aorta, placenta, muscle, pituitary gland, adrenals, mammary gland, bladder, lymph node, bone marrow, trachea, digestive tract, liver and tumor-associated endothelium.

Its subcellular location is the cell membrane. It is found in the membrane. The protein resides in the caveola. The protein localises to the cytoplasm. It localises to the perinuclear region. Its function is as follows. Endothelial cell-specific membrane protein involved in the formation of the diaphragms that bridge endothelial fenestrae. It is also required for the formation of stomata of caveolae and transendothelial channels. Functions in microvascular permeability, endothelial fenestrae contributing to the passage of water and solutes and regulating transcellular versus paracellular flow in different organs. Plays a specific role in embryonic development. The polypeptide is Plasmalemma vesicle-associated protein (PLVAP) (Homo sapiens (Human)).